Reading from the N-terminus, the 41-residue chain is Large ribosomal subunit protein bL36 (41 aa).

Belongs to the bacterial ribosomal protein bL36 family.

This Agrobacterium fabrum (strain C58 / ATCC 33970) (Agrobacterium tumefaciens (strain C58)) protein is Large ribosomal subunit protein bL36 (rpmJ).